Here is a 185-residue protein sequence, read N- to C-terminus: Large ribosomal subunit protein uL5 (185 aa).

It belongs to the universal ribosomal protein uL5 family. Part of the 50S ribosomal subunit; part of the 5S rRNA/L5/L18/L25 subcomplex. Contacts the 5S rRNA and the P site tRNA. Forms a bridge to the 30S subunit in the 70S ribosome.

In terms of biological role, this is one of the proteins that bind and probably mediate the attachment of the 5S RNA into the large ribosomal subunit, where it forms part of the central protuberance. In the 70S ribosome it contacts protein S13 of the 30S subunit (bridge B1b), connecting the 2 subunits; this bridge is implicated in subunit movement. Contacts the P site tRNA; the 5S rRNA and some of its associated proteins might help stabilize positioning of ribosome-bound tRNAs. The protein is Large ribosomal subunit protein uL5 of Parvibaculum lavamentivorans (strain DS-1 / DSM 13023 / NCIMB 13966).